Reading from the N-terminus, the 351-residue chain is Protein IBD2 (351 aa).

The span at 1-14 shows a compositional bias: polar residues; sequence MTPTNQSSGTTNAS. Residues 1 to 20 form a disordered region; the sequence is MTPTNQSSGTTNASVEVLSE. Phosphoserine is present on residues serine 100 and serine 106. Threonine 211 is modified (phosphothreonine). The disordered stretch occupies residues 223–249; the sequence is LHGDGQHSISSRKHSRSKNSKKNGHVR. The span at 232–249 shows a compositional bias: basic residues; sequence SSRKHSRSKNSKKNGHVR.

Belongs to the IBD2 family. In terms of assembly, interacts with BFA1.

The protein resides in the cytoplasm. It localises to the cytoskeleton. Its subcellular location is the spindle pole. Its function is as follows. Part of a checkpoint which monitors spindle integrity and prevents premature exit from mitosis. This cell-cycle arrest depends upon inhibition of the G-protein TEM1 by the BFA1/BUB2 complex. The sequence is that of Protein IBD2 (IBD2) from Saccharomyces cerevisiae (strain ATCC 204508 / S288c) (Baker's yeast).